The following is a 175-amino-acid chain: Gamma-crystallin-1 (175 aa).

Beta/gamma crystallin 'Greek key' domains follow at residues 2 to 40 (GKIF…RVEG) and 41 to 83 (GNWI…RFLP). Residues 84–88 (NYQGQ) form a connecting peptide region. 2 consecutive Beta/gamma crystallin 'Greek key' domains span residues 89–129 (YKMR…NVFD) and 130–172 (GHWM…RRVY).

Belongs to the beta/gamma-crystallin family. As to quaternary structure, monomer.

Crystallins are the dominant structural components of the vertebrate eye lens. The sequence is that of Gamma-crystallin-1 (cryg1) from Xenopus laevis (African clawed frog).